The primary structure comprises 361 residues: Uroporphyrinogen decarboxylase (361 aa).

Residues 44–48, aspartate 93, tyrosine 168, serine 223, and histidine 337 each bind substrate; that span reads RQAGR.

It belongs to the uroporphyrinogen decarboxylase family. As to quaternary structure, homodimer.

The protein localises to the cytoplasm. The catalysed reaction is uroporphyrinogen III + 4 H(+) = coproporphyrinogen III + 4 CO2. It participates in porphyrin-containing compound metabolism; protoporphyrin-IX biosynthesis; coproporphyrinogen-III from 5-aminolevulinate: step 4/4. In terms of biological role, catalyzes the decarboxylation of four acetate groups of uroporphyrinogen-III to yield coproporphyrinogen-III. The sequence is that of Uroporphyrinogen decarboxylase from Thermobifida fusca (strain YX).